Consider the following 266-residue polypeptide: Derlin-1 (266 aa).

Over 1 to 20 (MSSPGEFYNSLPPITKAYGT) the chain is Cytoplasmic. A helical transmembrane segment spans residues 21–41 (LCFFTTVATQLGLVAPVHIAL). At 42–55 (IPELVLKQFQIWRL) the chain is on the lumenal side. Residues 56–76 (ITNLFFLGGFSINFGIRLLMI) form a helical membrane-spanning segment. Topologically, residues 77–94 (ARYGVQLEKGPFERRTAD) are cytoplasmic. The helical transmembrane segment at 95–115 (FLWMMIFGSFTLLVLSVIPFF) threads the bilayer. The Lumenal portion of the chain corresponds to 116–156 (WTPFLGVSLVFMLLYLWSREFPNANISLYGLVTLKAFYLPW). Residues 157–177 (AMLALDVIFGSPIMPDLLGII) traverse the membrane as a helical segment. Residues 178–266 (AGHLYYFLTV…FRGRSYRLTD (89 aa)) are Cytoplasmic-facing. Residues 235-266 (GGVGGGGAYSSARAPPESSNTAFRGRSYRLTD) are disordered.

This sequence belongs to the derlin family.

It localises to the endoplasmic reticulum membrane. May be involved in the degradation process of specific misfolded endoplasmic reticulum (ER) luminal proteins. The sequence is that of Derlin-1 (DER1) from Arabidopsis thaliana (Mouse-ear cress).